A 678-amino-acid polypeptide reads, in one-letter code: Protein mono-ADP-ribosyltransferase PARP15 (678 aa).

The span at 1-19 (MAAPGPLPAAALSPGAPTP) shows a compositional bias: low complexity. A disordered region spans residues 1–67 (MAAPGPLPAA…SSRSMSRDNK (67 aa)). Residues 49–58 (GARKASRRSS) are compositionally biased toward basic residues. 2 Macro domains span residues 78–267 (NVVA…TNWS) and 293–464 (CFTA…KKRD). Substrate contacts are provided by residues 312–313 (DI), 324–325 (ST), Arg-331, Val-335, 409–413 (GTGNA), and Gln-449. A PARP catalytic domain is found at 482–678 (LPEHWTDMNH…YPEYLITFTA (197 aa)).

It belongs to the ARTD/PARP family.

It is found in the nucleus. The catalysed reaction is L-aspartyl-[protein] + NAD(+) = 4-O-(ADP-D-ribosyl)-L-aspartyl-[protein] + nicotinamide. It carries out the reaction L-glutamyl-[protein] + NAD(+) = 5-O-(ADP-D-ribosyl)-L-glutamyl-[protein] + nicotinamide. Functionally, mono-ADP-ribosyltransferase that mediates mono-ADP-ribosylation of target proteins. Acts as a negative regulator of transcription. This chain is Protein mono-ADP-ribosyltransferase PARP15, found in Homo sapiens (Human).